An 844-amino-acid chain; its full sequence is Translation initiation factor IF-2 (844 aa).

Residues 120–132 (RNSVNLVQPQQEK) show a composition bias toward polar residues. The tract at residues 120 to 220 (RNSVNLVQPQ…SGKGFKKANP (101 aa)) is disordered. Residues 161–175 (DEEKSSEDKSTESKN) show a composition bias toward basic and acidic residues. Residues 205–219 (SKAKKASGKGFKKAN) are compositionally biased toward basic residues. The 168-residue stretch at 343 to 510 (SRAPVVTIMG…AVLLQSEVLE (168 aa)) folds into the tr-type G domain. The segment at 352 to 359 (GHVDHGKT) is G1. 352–359 (GHVDHGKT) is a GTP binding site. Residues 377-381 (GITQH) are G2. The tract at residues 398 to 401 (DTPG) is G3. Residues 398–402 (DTPGH) and 452–455 (NKID) contribute to the GTP site. Positions 452–455 (NKID) are G4. The tract at residues 488 to 490 (SAK) is G5.

The protein belongs to the TRAFAC class translation factor GTPase superfamily. Classic translation factor GTPase family. IF-2 subfamily.

The protein resides in the cytoplasm. One of the essential components for the initiation of protein synthesis. Protects formylmethionyl-tRNA from spontaneous hydrolysis and promotes its binding to the 30S ribosomal subunits. Also involved in the hydrolysis of GTP during the formation of the 70S ribosomal complex. This is Translation initiation factor IF-2 from Francisella philomiragia subsp. philomiragia (strain ATCC 25017 / CCUG 19701 / FSC 153 / O#319-036).